We begin with the raw amino-acid sequence, 279 residues long: Thymidylate synthase (279 aa).

Residue 133 to 134 participates in dUMP binding; sequence RR. The active-site Nucleophile is the cysteine 154. Residues 178-181, asparagine 189, and 219-221 contribute to the dUMP site; these read RSND and HIY. Aspartate 181 contributes to the (6R)-5,10-methylene-5,6,7,8-tetrahydrofolate binding site. (6R)-5,10-methylene-5,6,7,8-tetrahydrofolate is bound at residue alanine 278.

Belongs to the thymidylate synthase family. Bacterial-type ThyA subfamily. As to quaternary structure, homodimer.

The protein localises to the cytoplasm. It catalyses the reaction dUMP + (6R)-5,10-methylene-5,6,7,8-tetrahydrofolate = 7,8-dihydrofolate + dTMP. The protein operates within pyrimidine metabolism; dTTP biosynthesis. Catalyzes the reductive methylation of 2'-deoxyuridine-5'-monophosphate (dUMP) to 2'-deoxythymidine-5'-monophosphate (dTMP) while utilizing 5,10-methylenetetrahydrofolate (mTHF) as the methyl donor and reductant in the reaction, yielding dihydrofolate (DHF) as a by-product. This enzymatic reaction provides an intracellular de novo source of dTMP, an essential precursor for DNA biosynthesis. The chain is Thymidylate synthase from Streptococcus pneumoniae (strain ATCC 700669 / Spain 23F-1).